Here is a 404-residue protein sequence, read N- to C-terminus: NADH-quinone oxidoreductase subunit D 2 (404 aa).

The protein belongs to the complex I 49 kDa subunit family. As to quaternary structure, NDH-1 is composed of 14 different subunits. Subunits NuoB, C, D, E, F, and G constitute the peripheral sector of the complex.

The protein resides in the cell inner membrane. The catalysed reaction is a quinone + NADH + 5 H(+)(in) = a quinol + NAD(+) + 4 H(+)(out). Functionally, NDH-1 shuttles electrons from NADH, via FMN and iron-sulfur (Fe-S) centers, to quinones in the respiratory chain. The immediate electron acceptor for the enzyme in this species is believed to be ubiquinone. Couples the redox reaction to proton translocation (for every two electrons transferred, four hydrogen ions are translocated across the cytoplasmic membrane), and thus conserves the redox energy in a proton gradient. This chain is NADH-quinone oxidoreductase subunit D 2, found in Rhizobium meliloti (strain 1021) (Ensifer meliloti).